The sequence spans 513 residues: Coniferin beta-glucosidase (513 aa).

A signal peptide spans Met1–Ala23. Residues Gln44, His145, and Asn190–Glu191 contribute to the a beta-D-glucoside site. The active-site Proton donor is the Glu191. A disulfide bridge links Cys210 with Cys219. A glycan (N-linked (GlcNAc...) asparagine) is linked at Asn223. The a beta-D-glucoside site is built by Tyr336 and Glu408. The Nucleophile role is filled by Glu408. Asn447 carries an N-linked (GlcNAc...) asparagine glycan. A beta-D-glucoside contacts are provided by residues Trp457, Glu464–Trp465, and Phe473.

It belongs to the glycosyl hydrolase 1 family. In terms of assembly, homodimer. In terms of processing, glycosylated.

It carries out the reaction 4-O-(beta-D-glucosyl)-(E)-coniferol + H2O = (E)-coniferol + D-glucose. With respect to regulation, inhibited by glucono-1,5-lactone, but not by bromoconduritol or conduritol B epoxide. Involved in the release of monolignols for lignin biosynthesis. Unable to hydrolyze 4-nitrophenyl beta-cellobioside or alpha-linked methylumbelliferyl glucoside. This is Coniferin beta-glucosidase from Pinus contorta (Shore pine).